A 189-amino-acid chain; its full sequence is uncharacterized protein (189 aa).

The region spanning 9–69 (ADTGGRILRA…SMLTSHIAAV (61 aa)) is the HTH tetR-type domain. A DNA-binding region (H-T-H motif) is located at residues 32 to 51 (TLAEIARRAGVSRPTVYRRW).

This is an uncharacterized protein from Mycobacterium bovis (strain ATCC BAA-935 / AF2122/97).